A 391-amino-acid chain; its full sequence is Succinate--CoA ligase [ADP-forming] subunit beta (391 aa).

The region spanning 9–245 (KQIFAKYGVP…ISEEDADERE (237 aa)) is the ATP-grasp domain. Residues Lys46, 53–55 (GRG), Glu99, Ala102, and Glu107 each bind ATP. Positions 200 and 214 each coordinate Mg(2+). Substrate contacts are provided by residues Asn265 and 322–324 (GIV).

It belongs to the succinate/malate CoA ligase beta subunit family. Heterotetramer of two alpha and two beta subunits. It depends on Mg(2+) as a cofactor.

It carries out the reaction succinate + ATP + CoA = succinyl-CoA + ADP + phosphate. The enzyme catalyses GTP + succinate + CoA = succinyl-CoA + GDP + phosphate. It functions in the pathway carbohydrate metabolism; tricarboxylic acid cycle; succinate from succinyl-CoA (ligase route): step 1/1. In terms of biological role, succinyl-CoA synthetase functions in the citric acid cycle (TCA), coupling the hydrolysis of succinyl-CoA to the synthesis of either ATP or GTP and thus represents the only step of substrate-level phosphorylation in the TCA. The beta subunit provides nucleotide specificity of the enzyme and binds the substrate succinate, while the binding sites for coenzyme A and phosphate are found in the alpha subunit. The sequence is that of Succinate--CoA ligase [ADP-forming] subunit beta from Sulfurimonas denitrificans (strain ATCC 33889 / DSM 1251) (Thiomicrospira denitrificans (strain ATCC 33889 / DSM 1251)).